Consider the following 350-residue polypeptide: tRNA uridine(34) hydroxylase (350 aa).

The Rhodanese domain occupies 146 to 240; it reads DDPDAVFIDM…YARRARAQGL (95 aa). Cys200 functions as the Cysteine persulfide intermediate in the catalytic mechanism. Basic and acidic residues predominate over residues 319–328; sequence RRRRAGRENG. Positions 319 to 350 are disordered; sequence RRRRAGRENGNKIFNKSRGRLNSKLSIPDPAE.

The protein belongs to the TrhO family.

It carries out the reaction uridine(34) in tRNA + AH2 + O2 = 5-hydroxyuridine(34) in tRNA + A + H2O. Catalyzes oxygen-dependent 5-hydroxyuridine (ho5U) modification at position 34 in tRNAs. The chain is tRNA uridine(34) hydroxylase from Salmonella newport (strain SL254).